We begin with the raw amino-acid sequence, 196 residues long: Sesquiterpene phosphatase astK (196 aa).

It belongs to the HAD-like hydrolase superfamily.

The enzyme catalyses (S,S)-drim-8-en-11-yl phosphate + H2O = (S,S)-drim-8-en-11-ol + phosphate. The protein operates within secondary metabolite biosynthesis; terpenoid biosynthesis. Its function is as follows. Sesquiterpene phosphatase; part of the gene cluster that mediates the biosynthesis of astellolides, drimane-type sesquiterpene esters that show antimicrobial, anti-inflammatory, and anti-tumor activities. The first step in astellolide biosynthesis is performed by the sesquiterpene cyclase astC that catalyzes the formation of drimanyl pyrophosphate from farnesyl pyrophosphate. Drimanyl pyrophosphate is then dephosphorylated by the sesquiterpene phosphatase astI to produce drimanyl monophosphate which is further dephosphorylated to drim-8-ene-11-ol by atsK. Drim-8-ene-11-ol is converted to confertifolin, probably by the cytochrome P450 monooxygenase astD and/or the dehydrogenase astE. The cytochrome P450 monooxygenases astB, astF and astJ then hydroxylate confertifolin at C6, C14, or C15 to form trihydroxy confertifolin. The nonribosomal peptide synthetase astA catalyzes ester bond formation between trihydroxy contifolin and benzoic acid (BA) or 4-hydroxy benzoic acid (4HBA), leading to the formation of dideacetyl astellolides A and B, respectively. Finally, the O-acetyltransferase astG converts dideacetyl astellolides A and B into deacetyl astellolides A and B. The protein is Sesquiterpene phosphatase astK of Aspergillus oryzae (strain ATCC 42149 / RIB 40) (Yellow koji mold).